Reading from the N-terminus, the 895-residue chain is AP-1 complex subunit gamma (895 aa).

5 HEAT repeats span residues 130–166 (TAMARDISPEIEKVISHSNPYIRKKAALCAIRVLRKV), 167–205 (PDLTENYIPKIKALLSERNHAVILTALTLIIEICEMDST), 211–256 (KKMV…ILGQ), 301–339 (NGLKVMAINILGRFLLNRDNNIRYVALNTLSRVVNTDIQ), and 341–376 (VQRHRNTIVECLKDPDVSIRCRALDLIYSLVTESNI). 3 disordered regions span residues 591–687 (KQEE…MNNM), 706–733 (NNNSMGGMMNNNNNNNNNNNNNNNNNKS), and 746–770 (QLTPTPQQPQSQSQQALSPTNQTSV). Composition is skewed to low complexity over residues 604-626 (PTQTPPQQHYQQQQQQPQQQSSQ), 639-658 (QSSANSGNNNNNNNKQGGNA), 675-687 (NGNMNNNNNMNNM), 706-731 (NNNSMGGMMNNNNNNNNNNNNNNNNN), and 746-765 (QLTPTPQQPQSQSQQALSPT). In terms of domain architecture, GAE spans 775–893 (PQPLTFLVYQ…SDVPDTPLPS (119 aa)).

Belongs to the adaptor complexes large subunit family. As to quaternary structure, adaptor protein complex 1 (AP-1) is a heterotetramer composed of two large adaptins (gamma-type subunit and beta-type subunit), a medium adaptin (mu-type subunit) and a small adaptin (sigma-type subunit). Interacts with rhgA.

It is found in the golgi apparatus. The protein localises to the trans-Golgi network. Its subcellular location is the cytoplasmic vesicle. The protein resides in the clathrin-coated vesicle membrane. Subunit of clathrin-associated adaptor protein complex 1 that plays a role in protein sorting in the trans-Golgi network (TGN) and endosomes. The AP complexes mediate the recruitment of clathrin to membranes and the recognition of sorting signals within the cytosolic tails of transmembrane cargo molecules. Also involved in early steps of phagocytosis and macropinocytosis. This is AP-1 complex subunit gamma (ap1g1) from Dictyostelium discoideum (Social amoeba).